A 276-amino-acid chain; its full sequence is Shikimate dehydrogenase (NADP(+)) (276 aa).

Shikimate contacts are provided by residues 15-17 (SKS) and T62. K66 (proton acceptor) is an active-site residue. E78 contributes to the NADP(+) binding site. Residues N87 and D103 each contribute to the shikimate site. NADP(+) is bound by residues 128–132 (GAGGA) and I217. Shikimate is bound at residue Y219. G240 serves as a coordination point for NADP(+).

It belongs to the shikimate dehydrogenase family. In terms of assembly, homodimer.

It catalyses the reaction shikimate + NADP(+) = 3-dehydroshikimate + NADPH + H(+). It participates in metabolic intermediate biosynthesis; chorismate biosynthesis; chorismate from D-erythrose 4-phosphate and phosphoenolpyruvate: step 4/7. Its function is as follows. Involved in the biosynthesis of the chorismate, which leads to the biosynthesis of aromatic amino acids. Catalyzes the reversible NADPH linked reduction of 3-dehydroshikimate (DHSA) to yield shikimate (SA). The chain is Shikimate dehydrogenase (NADP(+)) from Lysinibacillus sphaericus (strain C3-41).